We begin with the raw amino-acid sequence, 496 residues long: Cytochrome P450 71B1 (496 aa).

Cysteine 436 is a binding site for heme.

This sequence belongs to the cytochrome P450 family. The cofactor is heme.

The protein is Cytochrome P450 71B1 (CYP71B1) of Thlaspi arvense (Field penny-cress).